The following is a 266-amino-acid chain: MSSSTYRKLPKILAAGLAIGCAGGYYAYKNSNKPPGLNPEIYAPFTVNKITELTSDASLFSLVPQSPSEHLTTLEPIAKVTIRDPSMQVQRPYTPLYLDANELKFFIRKYEEGPVSSYIHSKKEGDTIELRGPFKTTKLDCTKYPRIVAIVAGTGIAPIYQLAQSVKSPVDIVYCSRPGQPPLLKEELEKECPNVRVKSVQNRLVNIHDILDWDNVTVPLKDTLCIVCGSQKFVSTIAGPKADYGARQGEVKGLLSNNPFGKVWKL.

Residues 12–28 traverse the membrane as a helical segment; it reads ILAAGLAIGCAGGYYAY. One can recognise an FAD-binding FR-type domain in the interval 40-140; the sequence is EIYAPFTVNK…RGPFKTTKLD (101 aa).

The protein belongs to the flavoprotein pyridine nucleotide cytochrome reductase family. It depends on FAD as a cofactor.

The protein resides in the mitochondrion outer membrane. This is an uncharacterized protein from Schizosaccharomyces pombe (strain 972 / ATCC 24843) (Fission yeast).